The sequence spans 320 residues: Reticulocalbin-2 (320 aa).

Residues 1-25 (MRLGPRPAVLGLLLLLLLYAAVAGA) form the signal peptide. EF-hand domains are found at residues 64–99 (EQQRRLQSIIKKIDSDSDGFLTENELSQWIQMSFKH) and 100–135 (YAMQEAKQQFVEYDKNSDGTVTWDEYNVQMYDRVID). Residues Asp-77, Asp-79, Asp-81, Glu-88, Asp-113, Asn-115, Asp-117, Thr-119, and Glu-124 each coordinate Ca(2+). Thr-140 carries the post-translational modification Phosphothreonine. 4 consecutive EF-hand domains span residues 150–185 (FRQLHLKDKKRFEKANQDSGPGLNLEEFIAFEHPEE), 189–224 (MTEFVIQEALEEHDKNGDGFVSLEEFLGDYRRDPTA), 230–265 (WILVEKDRFVNDYDKDSDGRLDPQELLSWVVPNNQG), and 266–301 (IAQEEALHLIDEMDLNSDKKLSEEEILENQDLFLTS). Ca(2+)-binding residues include Asp-167, Glu-176, Asp-202, Asn-204, Asp-206, Glu-213, Asp-243, Asp-245, Asp-247, Arg-249, Glu-254, Asp-279, Asn-281, Asp-283, Lys-285, and Glu-290. A Prevents secretion from ER motif is present at residues 317-320 (HDEL).

It belongs to the CREC family. As to quaternary structure, binds the snake venom phospholipase complex taipoxin. Ubiquitous.

It localises to the endoplasmic reticulum lumen. In terms of biological role, not known. Binds calcium. In Rattus norvegicus (Rat), this protein is Reticulocalbin-2 (Rcn2).